The chain runs to 210 residues: Uracil phosphoribosyltransferase (210 aa).

5-phospho-alpha-D-ribose 1-diphosphate is bound by residues Arg80, Arg105, and 132 to 140; that span reads DPMLATGGS. Uracil-binding positions include Ile195 and 200-202; that span reads GDA. Asp201 serves as a coordination point for 5-phospho-alpha-D-ribose 1-diphosphate.

It belongs to the UPRTase family. Mg(2+) serves as cofactor.

It carries out the reaction UMP + diphosphate = 5-phospho-alpha-D-ribose 1-diphosphate + uracil. Its pathway is pyrimidine metabolism; UMP biosynthesis via salvage pathway; UMP from uracil: step 1/1. With respect to regulation, allosterically activated by GTP. Its function is as follows. Catalyzes the conversion of uracil and 5-phospho-alpha-D-ribose 1-diphosphate (PRPP) to UMP and diphosphate. In Caldanaerobacter subterraneus subsp. tengcongensis (strain DSM 15242 / JCM 11007 / NBRC 100824 / MB4) (Thermoanaerobacter tengcongensis), this protein is Uracil phosphoribosyltransferase.